A 169-amino-acid chain; its full sequence is MIISIIIFSILSFILGVIVSLVSCFCKVKSNLSLINDIDELLPQMQCAQCGYPGCYAYSQAIVDGNENIYKCIPGGKEVVLKLENLLNKSDHRGNFLESLEDSVTYSIVEIDENNCVGCSKCRLVCPVDAVVGTYNFRHTVLIDSCTGCNLCIPLCPTNCIKKKIMFYE.

The segment at 1-23 (MIISIIIFSILSFILGVIVSLVS) is hydrophobic. Positions 30–89 (SNLSLINDIDELLPQMQCAQCGYPGCYAYSQAIVDGNENIYKCIPGGKEVVLKLENLLNK) constitute a 4Fe-4S domain. 12 residues coordinate [4Fe-4S] cluster: C47, C50, C55, C72, C116, C119, C122, C126, C146, C149, C152, and C156. 2 4Fe-4S ferredoxin-type domains span residues 107 to 136 (SIVEIDENNCVGCSKCRLVCPVDAVVGTYN) and 137 to 166 (FRHTVLIDSCTGCNLCIPLCPTNCIKKKIM).

The protein belongs to the 4Fe4S bacterial-type ferredoxin family. RnfB subfamily. In terms of assembly, the complex is composed of six subunits: RnfA, RnfB, RnfC, RnfD, RnfE and RnfG. [4Fe-4S] cluster serves as cofactor.

It is found in the cell inner membrane. Part of a membrane-bound complex that couples electron transfer with translocation of ions across the membrane. The chain is Ion-translocating oxidoreductase complex subunit B from Buchnera aphidicola subsp. Baizongia pistaciae (strain Bp).